Consider the following 188-residue polypeptide: Heparin-binding hemagglutinin homolog (188 aa).

Residues 162 to 188 (KAAAPARKAPAKKAPAKKAPAKKVTQK) form a disordered region. The segment covering 170 to 188 (APAKKAPAKKAPAKKVTQK) has biased composition (basic residues).

It to M.tuberculosis HbhA.

Might mediate adherence to host cells by binding sulfated glycoconjugates. The polypeptide is Heparin-binding hemagglutinin homolog (hbhA) (Mycobacterium leprae (strain TN)).